We begin with the raw amino-acid sequence, 325 residues long: MSDSASWQPSAPIANLLKRAAIVGQIRRFFSDRGLLEVETPAMSQATVTDIHLVPFQTCFIGPGAAGGMPLYLMTSPEYHMKRLLAAGSGPLFQLCRSFRNEEAGRYHNPEFTMLEWYRPHYDMYRLMNEVDDLLQQILDCDSAETLSYQQVFTRHVGIDPLSADKAQLYDAAVKWDLGEAASVEDDRDTLLQLLFAMVVEPNIGHDKPAFVYHFPASQAALAEISTEDHRVADRFEAYFKGIELANGFCELTDAREQRQRFEQDNRKRVAMKLSEQPIDENLLAALAQGMPECSGVALGVDRLVMLALKADRLSDVIAFAVERA.

Residue 76–78 (SPE) participates in substrate binding. ATP-binding positions include 100–102 (RNE) and N109. Y118 contributes to the substrate binding site. Residue 244-245 (EL) coordinates ATP. Residue E251 coordinates substrate. G300 is an ATP binding site.

Belongs to the class-II aminoacyl-tRNA synthetase family. EpmA subfamily. As to quaternary structure, homodimer.

The catalysed reaction is D-beta-lysine + L-lysyl-[protein] + ATP = N(6)-((3R)-3,6-diaminohexanoyl)-L-lysyl-[protein] + AMP + diphosphate + H(+). Functionally, with EpmB is involved in the beta-lysylation step of the post-translational modification of translation elongation factor P (EF-P). Catalyzes the ATP-dependent activation of (R)-beta-lysine produced by EpmB, forming a lysyl-adenylate, from which the beta-lysyl moiety is then transferred to the epsilon-amino group of a conserved specific lysine residue in EF-P. The protein is Elongation factor P--(R)-beta-lysine ligase of Sodalis glossinidius (strain morsitans).